Reading from the N-terminus, the 265-residue chain is Nitrogenase iron protein 2 (265 aa).

8–15 (GKGGIGKS) is an ATP binding site. Cys-91 is a binding site for [4Fe-4S] cluster. Arg-94 bears the ADP-ribosylarginine; by dinitrogenase reductase ADP-ribosyltransferase mark. Cys-126 is a binding site for [4Fe-4S] cluster.

It belongs to the NifH/BchL/ChlL family. As to quaternary structure, homodimer. [4Fe-4S] cluster serves as cofactor. In terms of processing, the reversible ADP-ribosylation of Arg-94 inactivates the nitrogenase reductase and regulates nitrogenase activity.

It catalyses the reaction N2 + 8 reduced [2Fe-2S]-[ferredoxin] + 16 ATP + 16 H2O = H2 + 8 oxidized [2Fe-2S]-[ferredoxin] + 2 NH4(+) + 16 ADP + 16 phosphate + 6 H(+). In terms of biological role, the key enzymatic reactions in nitrogen fixation are catalyzed by the nitrogenase complex, which has 2 components: the iron protein and the molybdenum-iron protein. This Methanothermobacter thermautotrophicus (strain ATCC 29096 / DSM 1053 / JCM 10044 / NBRC 100330 / Delta H) (Methanobacterium thermoautotrophicum) protein is Nitrogenase iron protein 2 (nifH2).